The following is a 107-amino-acid chain: UPF0473 protein llmg_0152 (107 aa).

Belongs to the UPF0473 family.

This Lactococcus lactis subsp. cremoris (strain MG1363) protein is UPF0473 protein llmg_0152.